Here is a 196-residue protein sequence, read N- to C-terminus: Xanthine phosphoribosyltransferase (196 aa).

2 residues coordinate xanthine: Leu20 and Asn27. 5-phospho-alpha-D-ribose 1-diphosphate is bound at residue 128–132; that stretch reads ATGAA. A xanthine-binding site is contributed by Lys156.

The protein belongs to the purine/pyrimidine phosphoribosyltransferase family. Xpt subfamily. In terms of assembly, homodimer.

It is found in the cytoplasm. The enzyme catalyses XMP + diphosphate = xanthine + 5-phospho-alpha-D-ribose 1-diphosphate. Its pathway is purine metabolism; XMP biosynthesis via salvage pathway; XMP from xanthine: step 1/1. Converts the preformed base xanthine, a product of nucleic acid breakdown, to xanthosine 5'-monophosphate (XMP), so it can be reused for RNA or DNA synthesis. The chain is Xanthine phosphoribosyltransferase from Brevibacillus brevis (strain 47 / JCM 6285 / NBRC 100599).